A 675-amino-acid polypeptide reads, in one-letter code: UvrABC system protein B (675 aa).

One can recognise a Helicase ATP-binding domain in the interval 32 to 417 (EGLSDGLAYQ…EHAGQVVEQV (386 aa)). 45–52 (GVTGSGKT) contributes to the ATP binding site. A Beta-hairpin motif is present at residues 98 to 121 (YYDYYQPEAYVPSRDLFIEKDSAI). A Helicase C-terminal domain is found at 436–602 (QVDDLMSEIN…QIKKQVKDII (167 aa)). The region spanning 634 to 669 (IKEIAKLEKAMQQAARDLQFEEAAVLRDRIRNIKEN) is the UVR domain.

Belongs to the UvrB family. In terms of assembly, forms a heterotetramer with UvrA during the search for lesions. Interacts with UvrC in an incision complex.

It localises to the cytoplasm. Its function is as follows. The UvrABC repair system catalyzes the recognition and processing of DNA lesions. A damage recognition complex composed of 2 UvrA and 2 UvrB subunits scans DNA for abnormalities. Upon binding of the UvrA(2)B(2) complex to a putative damaged site, the DNA wraps around one UvrB monomer. DNA wrap is dependent on ATP binding by UvrB and probably causes local melting of the DNA helix, facilitating insertion of UvrB beta-hairpin between the DNA strands. Then UvrB probes one DNA strand for the presence of a lesion. If a lesion is found the UvrA subunits dissociate and the UvrB-DNA preincision complex is formed. This complex is subsequently bound by UvrC and the second UvrB is released. If no lesion is found, the DNA wraps around the other UvrB subunit that will check the other stand for damage. The chain is UvrABC system protein B from Neisseria meningitidis serogroup A / serotype 4A (strain DSM 15465 / Z2491).